The following is a 500-amino-acid chain: ATP synthase subunit alpha (500 aa).

Residue 169-176 coordinates ATP; the sequence is GDRQTGKT.

The protein belongs to the ATPase alpha/beta chains family. In terms of assembly, F-type ATPases have 2 components, CF(1) - the catalytic core - and CF(0) - the membrane proton channel. CF(1) has five subunits: alpha(3), beta(3), gamma(1), delta(1), epsilon(1). CF(0) has three main subunits: a(1), b(2) and c(9-12). The alpha and beta chains form an alternating ring which encloses part of the gamma chain. CF(1) is attached to CF(0) by a central stalk formed by the gamma and epsilon chains, while a peripheral stalk is formed by the delta and b chains.

The protein resides in the cell membrane. It catalyses the reaction ATP + H2O + 4 H(+)(in) = ADP + phosphate + 5 H(+)(out). In terms of biological role, produces ATP from ADP in the presence of a proton gradient across the membrane. The alpha chain is a regulatory subunit. The protein is ATP synthase subunit alpha of Clostridioides difficile (strain 630) (Peptoclostridium difficile).